A 492-amino-acid chain; its full sequence is 5-taurinomethyluridine-[tRNA] synthase subunit GTPB3, mitochondrial (492 aa).

A mitochondrion-targeting transit peptide spans 1–20 (MWRGLSALVTQAAWAPLRLC). 5,10-methylenetetrahydrofolate-binding residues include Arg52, Glu112, and Lys152. The TrmE-type G domain occupies 249–416 (GANVVVTGPP…LLQALKTELA (168 aa)). Residues 256–263 (GPPNAGKS), 282–286 (GTTRD), 303–306 (DTAG), and 374–377 (NKSD) contribute to the GTP site. Asn259 is a K(+) binding site. Mg(2+) contacts are provided by Ser263 and Thr284. Residue Lys492 participates in 5,10-methylenetetrahydrofolate binding.

It belongs to the TRAFAC class TrmE-Era-EngA-EngB-Septin-like GTPase superfamily. TrmE GTPase family. As to quaternary structure, homodimer; forms a dimer in the presence of potassium. Interacts with MTO1; forms the GTPBP3-MTO1 complex composed of homodimers of GTPBP3 and MTO1. Requires K(+) as cofactor. In terms of tissue distribution, ubiquitously expressed. Highly expressed in tissues with high metabolic rates including heart, liver and brain. Weakly expressed in skeletal muscle.

The protein resides in the mitochondrion. The enzyme catalyses GTP + H2O = GDP + phosphate + H(+). Functionally, GTPase component of the GTPBP3-MTO1 complex that catalyzes the 5-taurinomethyluridine (taum(5)U) modification at the 34th wobble position (U34) of mitochondrial tRNAs (mt-tRNAs), which plays a role in mt-tRNA decoding and mitochondrial translation. Taum(5)U formation on mammalian mt-tRNA requires the presence of both GTPBP3-mediated GTPase activity and MTO1 catalytic activity. The polypeptide is 5-taurinomethyluridine-[tRNA] synthase subunit GTPB3, mitochondrial (Mus musculus (Mouse)).